The following is a 241-amino-acid chain: Carboxy-S-adenosyl-L-methionine synthase (241 aa).

S-adenosyl-L-methionine-binding positions include Tyr-38, 63-65 (GCS), 88-89 (DN), 116-117 (DI), Asn-131, and Arg-198.

This sequence belongs to the class I-like SAM-binding methyltransferase superfamily. Cx-SAM synthase family. In terms of assembly, homodimer.

It carries out the reaction prephenate + S-adenosyl-L-methionine = carboxy-S-adenosyl-L-methionine + 3-phenylpyruvate + H2O. Catalyzes the conversion of S-adenosyl-L-methionine (SAM) to carboxy-S-adenosyl-L-methionine (Cx-SAM). The polypeptide is Carboxy-S-adenosyl-L-methionine synthase (Haemophilus influenzae (strain 86-028NP)).